A 300-amino-acid polypeptide reads, in one-letter code: Elongator complex protein 5 (300 aa).

Residue serine 252 is modified to Phosphoserine. Positions 264–300 (QQALLRPRPGQATSHIFYEPDAYDDLDQEDPDDDLDI) are disordered. Residues 284 to 300 (DAYDDLDQEDPDDDLDI) are compositionally biased toward acidic residues.

This sequence belongs to the ELP5 family. Component of the elongator complex which consists of ELP1, ELP2, ELP3, ELP4, ELP5 and ELP6; in the complex, is required for optimal binding of ELP3 to ELP4. Tyrosine-phosphorylated. As to expression, ubiquitously expressed with high levels in heart, brain, liver, skeletal muscle and testis.

The protein localises to the nucleus. It localises to the cytoplasm. The protein operates within tRNA modification; 5-methoxycarbonylmethyl-2-thiouridine-tRNA biosynthesis. Its function is as follows. Component of the elongator complex which is required for multiple tRNA modifications, including mcm5U (5-methoxycarbonylmethyl uridine), mcm5s2U (5-methoxycarbonylmethyl-2-thiouridine), and ncm5U (5-carbamoylmethyl uridine). The elongator complex catalyzes formation of carboxymethyluridine in the wobble base at position 34 in tRNAs. Involved in cell migration. In Homo sapiens (Human), this protein is Elongator complex protein 5.